The chain runs to 97 residues: Large ribosomal subunit protein bL28 (97 aa).

The disordered stretch occupies residues 1–20 (MSRRCELTAKGPQVGHKVSH).

Belongs to the bacterial ribosomal protein bL28 family.

This is Large ribosomal subunit protein bL28 from Afipia carboxidovorans (strain ATCC 49405 / DSM 1227 / KCTC 32145 / OM5) (Oligotropha carboxidovorans).